The chain runs to 462 residues: MREVVSIQIGQCGIQIGNACWELYLLEHGINLDGSLKTKEELTASGSSASVGHDTSANDARTFFTETGNGKQVPRSIFVDLEPTVIDDVRNGCMRELYHPEQLISGKEDAANNYARGRYSIGKEVIDRVTSRLQKIAEQCDSLQGFLIFHSLGGGTGSGFTSLLVERLSTDYSKKCKLDFAVYPSPKVSTAVVEPYNALLTTHSTMDHSDCVFMVDNEAIYDICNNSLGVDRPAYRNLNRLIAQIVSSTTASLRFSGSMNVDLNEFQTNLVPFPRIHFPLVAYAPLMSAERSAHEQHAITTLTNACFESSNMMVKCDPRAGKFMACCMLYRGDVVPKDVNAAVSAIKSKRHIQFVDWCPTGFKIGINYEKPAFVPDGDLAKTSRACCMLSNTTAISVAFSNLSYKFDLMFKKRAFVHWYVGEGMEEGEFTEARENIAVLERDFEEVGLDNAEEGGDEDFDEF.

The GTP site is built by glutamine 11, glutamate 82, serine 151, glycine 155, threonine 156, threonine 190, asparagine 217, and asparagine 239. Glutamate 82 contributes to the Mg(2+) binding site. The active site involves glutamate 265.

Belongs to the tubulin family. As to quaternary structure, dimer of alpha and beta chains. A typical microtubule is a hollow water-filled tube with an outer diameter of 25 nm and an inner diameter of 15 nM. Alpha-beta heterodimers associate head-to-tail to form protofilaments running lengthwise along the microtubule wall with the beta-tubulin subunit facing the microtubule plus end conferring a structural polarity. Microtubules usually have 13 protofilaments but different protofilament numbers can be found in some organisms and specialized cells. The cofactor is Mg(2+).

It localises to the cytoplasm. The protein resides in the cytoskeleton. The catalysed reaction is GTP + H2O = GDP + phosphate + H(+). Tubulin is the major constituent of microtubules, a cylinder consisting of laterally associated linear protofilaments composed of alpha- and beta-tubulin heterodimers. Microtubules grow by the addition of GTP-tubulin dimers to the microtubule end, where a stabilizing cap forms. Below the cap, tubulin dimers are in GDP-bound state, owing to GTPase activity of alpha-tubulin. The protein is Tubulin alpha-4 chain (alphaTub67C) of Drosophila melanogaster (Fruit fly).